A 244-amino-acid polypeptide reads, in one-letter code: Probable transcriptional regulatory protein TT_C0469 (244 aa).

The protein belongs to the TACO1 family.

The protein resides in the cytoplasm. This is Probable transcriptional regulatory protein TT_C0469 from Thermus thermophilus (strain ATCC BAA-163 / DSM 7039 / HB27).